The primary structure comprises 344 residues: GLIPR1-like protein 2 (344 aa).

In terms of domain architecture, SCP spans 58-192 (VNLHNELRGD…IHAAIFICNY (135 aa)). A helical membrane pass occupies residues 254–274 (TFILLLRILCFILCVITVLIV). 2 stretches are compositionally biased toward acidic residues: residues 292 to 304 (EESE…EEKE) and 312 to 334 (EMEM…EEET). The tract at residues 292-344 (EESEAGNEEEEKEEEKKEKEEMEMEIMEMEEEKEEREEEEEETQKEKMEEEEK) is disordered. Basic and acidic residues predominate over residues 335-344 (QKEKMEEEEK).

The protein belongs to the CRISP family. Highly expressed in testis. Detected in prostate, kidney, bladder, lung and bone marrow.

Its subcellular location is the membrane. This Homo sapiens (Human) protein is GLIPR1-like protein 2 (GLIPR1L2).